A 297-amino-acid chain; its full sequence is Formamidopyrimidine-DNA glycosylase (297 aa).

The Schiff-base intermediate with DNA role is filled by Pro-2. Catalysis depends on Glu-3, which acts as the Proton donor. The Proton donor; for beta-elimination activity role is filled by Lys-58. DNA-binding residues include His-106, Arg-125, and Arg-168. The FPG-type zinc-finger motif lies at 259–295; the sequence is RVYDREGLACTARGCRGRVRRIVQAGRSTFYCETCQP. The active-site Proton donor; for delta-elimination activity is Arg-285.

The protein belongs to the FPG family. In terms of assembly, monomer. Zn(2+) is required as a cofactor.

It carries out the reaction Hydrolysis of DNA containing ring-opened 7-methylguanine residues, releasing 2,6-diamino-4-hydroxy-5-(N-methyl)formamidopyrimidine.. The catalysed reaction is 2'-deoxyribonucleotide-(2'-deoxyribose 5'-phosphate)-2'-deoxyribonucleotide-DNA = a 3'-end 2'-deoxyribonucleotide-(2,3-dehydro-2,3-deoxyribose 5'-phosphate)-DNA + a 5'-end 5'-phospho-2'-deoxyribonucleoside-DNA + H(+). Involved in base excision repair of DNA damaged by oxidation or by mutagenic agents. Acts as a DNA glycosylase that recognizes and removes damaged bases. Has a preference for oxidized purines, such as 7,8-dihydro-8-oxoguanine (8-oxoG). Has AP (apurinic/apyrimidinic) lyase activity and introduces nicks in the DNA strand. Cleaves the DNA backbone by beta-delta elimination to generate a single-strand break at the site of the removed base with both 3'- and 5'-phosphates. In Methylobacterium sp. (strain 4-46), this protein is Formamidopyrimidine-DNA glycosylase.